A 967-amino-acid polypeptide reads, in one-letter code: Kinesin-like protein KIF28P (967 aa).

A Kinesin motor domain is found at D7 to I355. ATP is bound at residue G111–S118. The FHA domain maps to A410 to G472. The stretch at N822–E851 forms a coiled coil.

The protein belongs to the TRAFAC class myosin-kinesin ATPase superfamily. Kinesin family.

It localises to the mitochondrion membrane. Its function is as follows. Microtubule-dependent motor protein required for mitochondrion morphology and transport of mitochondria in neuronal cells. This chain is Kinesin-like protein KIF28P (KIF28P), found in Homo sapiens (Human).